A 202-amino-acid polypeptide reads, in one-letter code: Ribosomal RNA small subunit methyltransferase G (202 aa).

Residues glycine 75, phenylalanine 80, 125–126 (VQ), and arginine 139 contribute to the S-adenosyl-L-methionine site.

Belongs to the methyltransferase superfamily. RNA methyltransferase RsmG family.

Its subcellular location is the cytoplasm. Functionally, specifically methylates the N7 position of a guanine in 16S rRNA. This Mesomycoplasma hyopneumoniae (strain 232) (Mycoplasma hyopneumoniae) protein is Ribosomal RNA small subunit methyltransferase G.